Reading from the N-terminus, the 208-residue chain is Thymidylate kinase (208 aa).

ATP is bound at residue 11-18; sequence GGEGAGKS.

The protein belongs to the thymidylate kinase family.

It carries out the reaction dTMP + ATP = dTDP + ADP. Its function is as follows. Phosphorylation of dTMP to form dTDP in both de novo and salvage pathways of dTTP synthesis. This chain is Thymidylate kinase (tmk), found in Caulobacter vibrioides (strain ATCC 19089 / CIP 103742 / CB 15) (Caulobacter crescentus).